The sequence spans 127 residues: Large ribosomal subunit protein bL12 (127 aa).

This sequence belongs to the bacterial ribosomal protein bL12 family. Homodimer. Part of the ribosomal stalk of the 50S ribosomal subunit. Forms a multimeric L10(L12)X complex, where L10 forms an elongated spine to which 2 to 4 L12 dimers bind in a sequential fashion. Binds GTP-bound translation factors.

Functionally, forms part of the ribosomal stalk which helps the ribosome interact with GTP-bound translation factors. Is thus essential for accurate translation. The polypeptide is Large ribosomal subunit protein bL12 (Desulforapulum autotrophicum (strain ATCC 43914 / DSM 3382 / VKM B-1955 / HRM2) (Desulfobacterium autotrophicum)).